Reading from the N-terminus, the 244-residue chain is Ethylene-responsive transcription factor ERF013 (244 aa).

The disordered stretch occupies residues 1–33; sequence MVKQELKIQVTTSSSSLSHSSSSSSSSTSALRH. The span at 11–29 shows a compositional bias: low complexity; sequence TTSSSSLSHSSSSSSSSTS. A DNA-binding region (AP2/ERF) is located at residues 42–99; the sequence is KYKGVRMRSWGSWVTEIRAPNQKTRIWLGSYSTAEAAARAYDAALLCLKGPKANLNFP. The segment at 123–178 is disordered; that stretch reads QKVAAQAANSSSDHFTPPSDENDHDHDDGLDHHPSASSSAASSPPDDDHHNDDDGD. Over residues 143–156 the composition is skewed to basic and acidic residues; the sequence is ENDHDHDDGLDHHP. The span at 157-166 shows a compositional bias: low complexity; sequence SASSSAASSP.

The protein belongs to the AP2/ERF transcription factor family. ERF subfamily.

The protein resides in the nucleus. Its function is as follows. Probably acts as a transcriptional activator. Binds to the GCC-box pathogenesis-related promoter element. May be involved in the regulation of gene expression by stress factors and by components of stress signal transduction pathways. This Arabidopsis thaliana (Mouse-ear cress) protein is Ethylene-responsive transcription factor ERF013 (ERF013).